The chain runs to 330 residues: Aspartate--ammonia ligase (330 aa).

Belongs to the class-II aminoacyl-tRNA synthetase family. AsnA subfamily.

It localises to the cytoplasm. It catalyses the reaction L-aspartate + NH4(+) + ATP = L-asparagine + AMP + diphosphate + H(+). It participates in amino-acid biosynthesis; L-asparagine biosynthesis; L-asparagine from L-aspartate (ammonia route): step 1/1. The protein is Aspartate--ammonia ligase of Streptococcus agalactiae serotype Ia (strain ATCC 27591 / A909 / CDC SS700).